We begin with the raw amino-acid sequence, 358 residues long: 3-dehydroquinate synthase (358 aa).

Residues 105 to 109 (GVVGD), 129 to 130 (TT), K142, K151, and 169 to 172 (TLKT) contribute to the NAD(+) site. E184, H245, and H262 together coordinate Zn(2+).

Belongs to the sugar phosphate cyclases superfamily. Dehydroquinate synthase family. NAD(+) serves as cofactor. Requires Co(2+) as cofactor. It depends on Zn(2+) as a cofactor.

It localises to the cytoplasm. It catalyses the reaction 7-phospho-2-dehydro-3-deoxy-D-arabino-heptonate = 3-dehydroquinate + phosphate. The protein operates within metabolic intermediate biosynthesis; chorismate biosynthesis; chorismate from D-erythrose 4-phosphate and phosphoenolpyruvate: step 2/7. Catalyzes the conversion of 3-deoxy-D-arabino-heptulosonate 7-phosphate (DAHP) to dehydroquinate (DHQ). In Enterococcus faecalis (strain ATCC 700802 / V583), this protein is 3-dehydroquinate synthase.